The chain runs to 171 residues: UPF0398 protein spyM18_1659 (171 aa).

It belongs to the UPF0398 family.

The polypeptide is UPF0398 protein spyM18_1659 (Streptococcus pyogenes serotype M18 (strain MGAS8232)).